The primary structure comprises 446 residues: tRNA modification GTPase MnmE (446 aa).

The (6S)-5-formyl-5,6,7,8-tetrahydrofolate site is built by R23, E81, and K120. The 155-residue stretch at G216–D370 folds into the TrmE-type G domain. N226 serves as a coordination point for K(+). Residues N226 to S231, S245 to T251, and D270 to G273 contribute to the GTP site. S230 contributes to the Mg(2+) binding site. 3 residues coordinate K(+): S245, I247, and T250. Residue T251 coordinates Mg(2+). A (6S)-5-formyl-5,6,7,8-tetrahydrofolate-binding site is contributed by K446.

The protein belongs to the TRAFAC class TrmE-Era-EngA-EngB-Septin-like GTPase superfamily. TrmE GTPase family. In terms of assembly, homodimer. Heterotetramer of two MnmE and two MnmG subunits. K(+) serves as cofactor.

Its subcellular location is the cytoplasm. Its function is as follows. Exhibits a very high intrinsic GTPase hydrolysis rate. Involved in the addition of a carboxymethylaminomethyl (cmnm) group at the wobble position (U34) of certain tRNAs, forming tRNA-cmnm(5)s(2)U34. This chain is tRNA modification GTPase MnmE, found in Aliarcobacter butzleri (strain RM4018) (Arcobacter butzleri).